The chain runs to 69 residues: Conotoxin Lp3.1 (69 aa).

The N-terminal stretch at 1–20 (MLKMGVLLFIFLVLFPLTTL) is a signal peptide. The propeptide occupies 21 to 54 (ELDTDRPVERHAAIKQDLKPQERRGIRLHAPRDE). Disulfide bonds link C55/C67, C56/C65, and C61/C68.

It belongs to the conotoxin M superfamily. As to expression, expressed by the venom duct.

The protein localises to the secreted. In Conus leopardus (Leopard cone), this protein is Conotoxin Lp3.1.